The following is a 657-amino-acid chain: Pentatricopeptide repeat-containing protein At2g37310 (657 aa).

PPR repeat units follow at residues 21 to 55 (DGGAYGHLIQHFTRHRLPLHVLQLHARIVVFSIKP), 56 to 86 (DNFLASKLISFYTRQDRFRQALHVFDEITVR), 87 to 121 (NAFSYNALLIAYTSREMYFDAFSLFLSWIGSSCYS), 128 to 165 (DSISISCVLKALSGCDDFWLGSLARQVHGFVIRGGFDS), 166 to 196 (DVFVGNGMITYYTKCDNIESARKVFDEMSER), 197 to 232 (DVVSWNSMISGYSQSGSFEDCKKMYKAMLACSDFKP), 233 to 267 (NGVTVISVFQACGQSSDLIFGLEVHKKMIENHIQM), 268 to 298 (DLSLCNAVIGFYAKCGSLDYARALFDEMSEK), 299 to 333 (DSVTYGAIISGYMAHGLVKEAMALFSEMESIGLST), 334 to 364 (WNAMISGLMQNNHHEEVINSFREMIRCGSRP), 365 to 399 (NTVTLSSLLPSLTYSSNLKGGKEIHAFAIRNGADN), 400 to 430 (NIYVTTSIIDNYAKLGFLLGAQRVFDNCKDR), 431 to 465 (SLIAWTAIITAYAVHGDSDSACSLFDQMQCLGTKP), 466 to 501 (DDVTLTAVLSAFAHSGDSDMAQHIFDSMLTKYDIEP), and 502 to 536 (GVEHYACMVSVLSRAGKLSDAMEFISKMPIDPIAK). The type E motif stretch occupies residues 537 to 612 (VWGALLNGAS…IPGTSWIETE (76 aa)). Positions 613–643 (KGLRSFIAKDSSCERSKEMYEIIEGLVESMS) are type E(+) motif.

This sequence belongs to the PPR family. PCMP-E subfamily.

The sequence is that of Pentatricopeptide repeat-containing protein At2g37310 (PCMP-E49) from Arabidopsis thaliana (Mouse-ear cress).